A 132-amino-acid polypeptide reads, in one-letter code: Small ribosomal subunit protein uS8 (132 aa).

This sequence belongs to the universal ribosomal protein uS8 family. As to quaternary structure, part of the 30S ribosomal subunit. Contacts proteins S5 and S12.

One of the primary rRNA binding proteins, it binds directly to 16S rRNA central domain where it helps coordinate assembly of the platform of the 30S subunit. The sequence is that of Small ribosomal subunit protein uS8 from Corynebacterium glutamicum (strain R).